A 244-amino-acid polypeptide reads, in one-letter code: Carboxy-S-adenosyl-L-methionine synthase (244 aa).

S-adenosyl-L-methionine contacts are provided by residues Tyr-41, 66-68 (GCS), Asn-134, and Arg-201.

Belongs to the class I-like SAM-binding methyltransferase superfamily. Cx-SAM synthase family. As to quaternary structure, homodimer.

The enzyme catalyses prephenate + S-adenosyl-L-methionine = carboxy-S-adenosyl-L-methionine + 3-phenylpyruvate + H2O. Functionally, catalyzes the conversion of S-adenosyl-L-methionine (SAM) to carboxy-S-adenosyl-L-methionine (Cx-SAM). This is Carboxy-S-adenosyl-L-methionine synthase from Cellvibrio japonicus (strain Ueda107) (Pseudomonas fluorescens subsp. cellulosa).